The following is a 298-amino-acid chain: ATP synthase gamma chain (298 aa).

This sequence belongs to the ATPase gamma chain family. As to quaternary structure, F-type ATPases have 2 components, CF(1) - the catalytic core - and CF(0) - the membrane proton channel. CF(1) has five subunits: alpha(3), beta(3), gamma(1), delta(1), epsilon(1). CF(0) has three main subunits: a, b and c.

The protein localises to the cell inner membrane. Its function is as follows. Produces ATP from ADP in the presence of a proton gradient across the membrane. The gamma chain is believed to be important in regulating ATPase activity and the flow of protons through the CF(0) complex. In Francisella tularensis subsp. holarctica (strain FTNF002-00 / FTA), this protein is ATP synthase gamma chain.